Reading from the N-terminus, the 154-residue chain is 3-hydroxyacyl-[acyl-carrier-protein] dehydratase FabZ (154 aa).

Residue His-54 is part of the active site.

The protein belongs to the thioester dehydratase family. FabZ subfamily.

It localises to the cytoplasm. The catalysed reaction is a (3R)-hydroxyacyl-[ACP] = a (2E)-enoyl-[ACP] + H2O. Functionally, involved in unsaturated fatty acids biosynthesis. Catalyzes the dehydration of short chain beta-hydroxyacyl-ACPs and long chain saturated and unsaturated beta-hydroxyacyl-ACPs. The chain is 3-hydroxyacyl-[acyl-carrier-protein] dehydratase FabZ from Shewanella baltica (strain OS223).